We begin with the raw amino-acid sequence, 1057 residues long: Carbamoyl phosphate synthase large chain (1057 aa).

Positions 1 to 401 (MPKRNDIKTI…SLLKAIRSLE (401 aa)) are carboxyphosphate synthetic domain. ATP contacts are provided by Arg-129, Arg-169, Gly-175, Gly-176, Lys-208, Ile-210, Glu-215, Gly-241, Ile-242, His-243, Gln-284, and Glu-298. One can recognise an ATP-grasp 1 domain in the interval 133-327 (RTLMNYLNVP…IAKLAAKIAV (195 aa)). Gln-284, Glu-298, and Asn-300 together coordinate Mg(2+). Positions 284, 298, and 300 each coordinate Mn(2+). An oligomerization domain region spans residues 402–546 (YGVHHLGLPN…YGTYETENES (145 aa)). Positions 547–929 (IITDKEKILV…ALFKGLTGSG (383 aa)) are carbamoyl phosphate synthetic domain. The region spanning 671–861 (EALLRKINVP…MAQLAMRAII (191 aa)) is the ATP-grasp 2 domain. Residues Arg-707, Arg-746, Leu-748, Glu-752, Gly-777, Val-778, His-779, Ser-780, Gln-820, and Glu-832 each coordinate ATP. Residues Gln-820, Glu-832, and Asn-834 each contribute to the Mg(2+) site. Gln-820, Glu-832, and Asn-834 together coordinate Mn(2+). Positions 930 to 1057 (VEVKDHGTVL…ESMTFTMRQM (128 aa)) constitute an MGS-like domain. Residues 930–1057 (VEVKDHGTVL…ESMTFTMRQM (128 aa)) form an allosteric domain region.

The protein belongs to the CarB family. As to quaternary structure, composed of two chains; the small (or glutamine) chain promotes the hydrolysis of glutamine to ammonia, which is used by the large (or ammonia) chain to synthesize carbamoyl phosphate. Tetramer of heterodimers (alpha,beta)4. It depends on Mg(2+) as a cofactor. Requires Mn(2+) as cofactor.

The enzyme catalyses hydrogencarbonate + L-glutamine + 2 ATP + H2O = carbamoyl phosphate + L-glutamate + 2 ADP + phosphate + 2 H(+). It catalyses the reaction hydrogencarbonate + NH4(+) + 2 ATP = carbamoyl phosphate + 2 ADP + phosphate + 2 H(+). Its pathway is amino-acid biosynthesis; L-arginine biosynthesis; carbamoyl phosphate from bicarbonate: step 1/1. It participates in pyrimidine metabolism; UMP biosynthesis via de novo pathway; (S)-dihydroorotate from bicarbonate: step 1/3. Functionally, large subunit of the glutamine-dependent carbamoyl phosphate synthetase (CPSase). CPSase catalyzes the formation of carbamoyl phosphate from the ammonia moiety of glutamine, carbonate, and phosphate donated by ATP, constituting the first step of 2 biosynthetic pathways, one leading to arginine and/or urea and the other to pyrimidine nucleotides. The large subunit (synthetase) binds the substrates ammonia (free or transferred from glutamine from the small subunit), hydrogencarbonate and ATP and carries out an ATP-coupled ligase reaction, activating hydrogencarbonate by forming carboxy phosphate which reacts with ammonia to form carbamoyl phosphate. The chain is Carbamoyl phosphate synthase large chain from Staphylococcus aureus (strain bovine RF122 / ET3-1).